The sequence spans 578 residues: Lysine--tRNA ligase (578 aa).

Mg(2+) is bound by residues glutamate 414 and glutamate 421.

This sequence belongs to the class-II aminoacyl-tRNA synthetase family. Homodimer. Mg(2+) is required as a cofactor.

It is found in the cytoplasm. It catalyses the reaction tRNA(Lys) + L-lysine + ATP = L-lysyl-tRNA(Lys) + AMP + diphosphate. In Porphyromonas gingivalis (strain ATCC 33277 / DSM 20709 / CIP 103683 / JCM 12257 / NCTC 11834 / 2561), this protein is Lysine--tRNA ligase.